Reading from the N-terminus, the 276-residue chain is Diaminopimelate epimerase (276 aa).

Positions 13, 46, and 66 each coordinate substrate. Cysteine 75 serves as the catalytic Proton donor. Residues 76-77 (GN), asparagine 159, asparagine 192, and 210-211 (ER) each bind substrate. Cysteine 219 serves as the catalytic Proton acceptor. 220–221 (GT) serves as a coordination point for substrate.

The protein belongs to the diaminopimelate epimerase family. In terms of assembly, homodimer.

It localises to the cytoplasm. The enzyme catalyses (2S,6S)-2,6-diaminopimelate = meso-2,6-diaminopimelate. It functions in the pathway amino-acid biosynthesis; L-lysine biosynthesis via DAP pathway; DL-2,6-diaminopimelate from LL-2,6-diaminopimelate: step 1/1. Its function is as follows. Catalyzes the stereoinversion of LL-2,6-diaminopimelate (L,L-DAP) to meso-diaminopimelate (meso-DAP), a precursor of L-lysine and an essential component of the bacterial peptidoglycan. The protein is Diaminopimelate epimerase of Aeromonas hydrophila subsp. hydrophila (strain ATCC 7966 / DSM 30187 / BCRC 13018 / CCUG 14551 / JCM 1027 / KCTC 2358 / NCIMB 9240 / NCTC 8049).